A 473-amino-acid polypeptide reads, in one-letter code: Probable lipid II flippase MurJ (473 aa).

Helical transmembrane passes span 31–51 (TFGASSTLDAYYVSIVFPFFL), 90–110 (LVTLLIVFLSEVFPYFMASIF), 125–145 (LIRLTAPFITIVFVWAVFYSV), 153–173 (FLPALTPMFSNVGVIVGCLFG), 177–197 (WAAAGFTIGGLAALLVLLPFG), 215–235 (FFGTFMTMAVSQVTTLIDVNV), 253–273 (LYQLPLGIFGVAVSTVALSTL), 300–320 (IGLMALSERIISLLFGYGAFT), 327–347 (SAQILFMYAIGLCFVSLFNLL), 360–380 (PFFATLLVSAVNISLDVILGF), 382–402 (MGASGIALATSVSYIAGFVFL), 414–434 (IFKISLASAVMGTVILLLRGS), and 439–459 (LGTIFLVLIGVFVYVLFSKLL).

Belongs to the MurJ/MviN family.

It localises to the cell inner membrane. Its pathway is cell wall biogenesis; peptidoglycan biosynthesis. Involved in peptidoglycan biosynthesis. Transports lipid-linked peptidoglycan precursors from the inner to the outer leaflet of the cytoplasmic membrane. The sequence is that of Probable lipid II flippase MurJ from Thermotoga maritima (strain ATCC 43589 / DSM 3109 / JCM 10099 / NBRC 100826 / MSB8).